A 406-amino-acid chain; its full sequence is Linalool 8-monooxygenase (406 aa).

Cys-355 provides a ligand contact to heme.

It belongs to the cytochrome P450 family. The cofactor is heme.

It catalyses the reaction linalool + 2 reduced [NADPH--hemoprotein reductase] + 2 O2 = (6E)-8-oxolinalool + 2 oxidized [NADPH--hemoprotein reductase] + 3 H2O + 2 H(+). Its pathway is terpene metabolism; linalool degradation. Its function is as follows. Catalyzes the 8-methyl hydroxylation of linalool. The protein is Linalool 8-monooxygenase (linC) of Pseudomonas putida (Arthrobacter siderocapsulatus).